Here is a 295-residue protein sequence, read N- to C-terminus: Protoheme IX farnesyltransferase (295 aa).

9 helical membrane-spanning segments follow: residues 8-28, 35-55, 74-94, 106-125, 132-152, 162-182, 208-228, 233-253, and 264-284; these read VTKP…FLLA, YPLF…GCVF, VLVK…LLGI, PLAM…VYSL, VYGT…GYCA, LILL…IAIF, ITLY…GGYA, LVVA…GYKA, and FVFS…DFMV.

This sequence belongs to the UbiA prenyltransferase family. Protoheme IX farnesyltransferase subfamily.

It is found in the cell inner membrane. The catalysed reaction is heme b + (2E,6E)-farnesyl diphosphate + H2O = Fe(II)-heme o + diphosphate. It functions in the pathway porphyrin-containing compound metabolism; heme O biosynthesis; heme O from protoheme: step 1/1. Functionally, converts heme B (protoheme IX) to heme O by substitution of the vinyl group on carbon 2 of heme B porphyrin ring with a hydroxyethyl farnesyl side group. The protein is Protoheme IX farnesyltransferase of Cronobacter sakazakii (strain ATCC BAA-894) (Enterobacter sakazakii).